A 101-amino-acid chain; its full sequence is Non-histone chromosomal protein HMG-14 (101 aa).

Positions 1–101 (MPKRKVSSAE…EAEEKEAKSD (101 aa)) are disordered. S7 is modified (ADP-ribosylserine). A Phosphoserine modification is found at S8. Residue K14 is modified to N6-acetyllysine. The residue at position 21 (S21) is a Phosphoserine. S25 carries the ADP-ribosylserine; alternate modification. S25 carries the phosphoserine; alternate modification. K27 carries the post-translational modification N6-acetyllysine. Composition is skewed to basic and acidic residues over residues 33–51 (VETK…DKKV) and 70–86 (ETKE…KNEE). Phosphothreonine is present on T82. The residue at position 83 (K83) is an N6-acetyllysine. S87, S90, and S100 each carry phosphoserine.

The protein belongs to the HMGN family. As to quaternary structure, interacts with transcriptional regulator SEHBP. Post-translationally, phosphorylation on Ser-21 and Ser-25 weakens binding to nucleosomes and increases the rate of H3 phosphorylation.

It localises to the nucleus. In terms of biological role, binds to the inner side of the nucleosomal DNA thus altering the interaction between the DNA and the histone octamer. May be involved in the process which maintains transcribable genes in a unique chromatin conformation. Inhibits the phosphorylation of nucleosomal histones H3 and H2A by RPS6KA5/MSK1 and RPS6KA3/RSK2. This is Non-histone chromosomal protein HMG-14 (HMGN1) from Bos taurus (Bovine).